Here is a 1816-residue protein sequence, read N- to C-terminus: Kinesin-like protein KIF1B (1816 aa).

Residue Ser-2 is modified to N-acetylserine. The region spanning 5–354 (SVKVAVRVRP…LRYADRAKQI (350 aa)) is the Kinesin motor domain. 97–104 (GQTGAGKS) is a binding site for ATP. The segment at 270-350 (NINKSLTTLG…TLSTLRYADR (81 aa)) is interaction with KIFBP. Positions 365–386 (NAKLVRELKEEVTRLKDLLRAQ) form a coiled coil. Residues 431 to 450 (FSTASMGSLTSSPSSCSLSS) form a disordered region. Residues 432–450 (STASMGSLTSSPSSCSLSS) are compositionally biased toward low complexity. Residues 470 to 502 (GEEAIERLKESEKIIAELNETWEEKLRKTEAIR) are a coiled coil. Positions 556–612 (TRVGQADAERRQDIVLSGAHIKEEHCIFRSERSNSGEVIVTLEPCERSETYVNGKRV) constitute an FHA domain. Thr-647 and Thr-652 each carry phosphothreonine. Residues Gln-663 and Glu-665 each carry the phosphoserine modification. Coiled coils occupy residues 668-737 (EKQG…EEEV) and 841-869 (SLEK…AQDE). Ser-1054 and Ser-1057 each carry phosphoserine. Residue Thr-1075 is modified to Phosphothreonine. Phosphoserine occurs at positions 1141, 1416, 1454, and 1487. The tract at residues 1550–1570 (STTTFESAITPSESSGYDSGD) is disordered. Polar residues predominate over residues 1554 to 1566 (FESAITPSESSGY). A phosphoserine mark is found at Ser-1573, Ser-1603, Ser-1610, and Ser-1613. A disordered region spans residues 1617-1660 (RDPSESSFSSATLTPSSTCPSLVDSRSNSLDQKTPEANSRASSP). Positions 1621-1634 (ESSFSSATLTPSST) are enriched in low complexity. Residues 1640 to 1658 (DSRSNSLDQKTPEANSRAS) show a composition bias toward polar residues. Positions 1702-1799 (VSKKGYLHFK…WLYAFNPLLA (98 aa)) constitute a PH domain.

Belongs to the TRAFAC class myosin-kinesin ATPase superfamily. Kinesin family. Unc-104 subfamily. As to quaternary structure, monomer. Interacts with KIFBP; positively regulates KIF1B microtubule motor activity. Interacts (via C-terminus end of the kinesin-motor domain) with CHP1; the interaction occurs in a calcium-dependent manner. In terms of assembly, interacts with MADD (via death domain); links this isoform to Rab3-carrying vesicles in anterograde synaptic vesicle transport. Isoform 3 is abundant in the skeletal muscle. It is also expressed in fetal brain, lung and kidney, and adult heart, placenta, testis, ovary and small intestine. Isoform 2 is abundant in the brain and also expressed in fetal heart, lung, liver and kidney, and adult skeletal muscle, placenta, liver, kidney, heart, spleen, thymus, prostate, testis, ovary, small intestine, colon and pancreas.

It localises to the cytoplasm. The protein resides in the cytoskeleton. The protein localises to the cytoplasmic vesicle. Its subcellular location is the secretory vesicle. It is found in the synaptic vesicle membrane. It localises to the mitochondrion. The catalysed reaction is ATP + H2O + a kinesin associated with a microtubule at position (n) = ADP + phosphate a kinesin associated with a microtubule at position (n+1, toward the plus end).. In terms of biological role, has a plus-end-directed microtubule motor activity and functions as a motor for transport of vesicles and organelles along microtubules. Its function is as follows. Has a plus-end-directed microtubule motor activity and functions as a motor for anterograde synaptic vesicle transport along axonal microtubules from the cell body to the presynapse in neuronal cells. Functions as a downstream effector in a developmental apoptotic pathway that is activated when nerve growth factor (NGF) becomes limiting for neuronal progenitor cells. Has a plus-end-directed microtubule motor activity and functions as a motor for anterograde transport of mitochondria. This Homo sapiens (Human) protein is Kinesin-like protein KIF1B.